A 211-amino-acid chain; its full sequence is Small ribosomal subunit protein uS5 (211 aa).

Residues 50–113 (LEDEVLDINM…DNAKINITRI (64 aa)) enclose the S5 DRBM domain.

The protein belongs to the universal ribosomal protein uS5 family. In terms of assembly, part of the 30S ribosomal subunit. Contacts protein S4.

With S4 and S12 plays an important role in translational accuracy. This Methanococcoides burtonii (strain DSM 6242 / NBRC 107633 / OCM 468 / ACE-M) protein is Small ribosomal subunit protein uS5.